A 315-amino-acid chain; its full sequence is Olfactory receptor 52R1 (315 aa).

Residues 1–28 are Extracellular-facing; that stretch reads MVLASGNSSSHPVSFILLGIPGLESFQL. Asn-7 carries N-linked (GlcNAc...) asparagine glycosylation. The chain crosses the membrane as a helical span at residues 29–49; that stretch reads WIAFPFCATYAVAVVGNITLL. The Cytoplasmic portion of the chain corresponds to 50 to 57; the sequence is HVIRIDHT. The helical transmembrane segment at 58–78 threads the bilayer; that stretch reads LHEPMYLFLAMLAITDLVLSS. Over 79–102 the chain is Extracellular; it reads STQPKMLAIFWFHAHEIQYHACLI. An intrachain disulfide couples Cys-100 to Cys-192. The helical transmembrane segment at 103 to 123 threads the bilayer; it reads QVFFIHAFSSVESGVLMAMAL. Residues 124-142 lie on the Cytoplasmic side of the membrane; that stretch reads DCYVAICFPLRHSSILTPS. A helical membrane pass occupies residues 143-163; that stretch reads VVIKLGTIVMLRGLLWVSPFC. The Extracellular portion of the chain corresponds to 164 to 199; it reads FMVSRMPFCQHQAIPQSYCEHMAVLKLVCADTSISR. The chain crosses the membrane as a helical span at residues 200–220; the sequence is GNGLFVAFSVAGFDMIVIGMS. Residues 221–240 are Cytoplasmic-facing; that stretch reads YVMILRAVLQLPSGEARLKA. The helical transmembrane segment at 241-261 threads the bilayer; that stretch reads FSTRSSHICVILALYIPALFS. Topologically, residues 262 to 276 are extracellular; the sequence is FLTYRFGHDVPRVVH. The helical transmembrane segment at 277–297 threads the bilayer; the sequence is ILFANLYLLIPPMLNPIIYGV. Residues 298-315 lie on the Cytoplasmic side of the membrane; it reads RTKQIGDRVIQGCCGNIP.

This sequence belongs to the G-protein coupled receptor 1 family.

It localises to the cell membrane. Functionally, odorant receptor. The chain is Olfactory receptor 52R1 (OR52R1) from Homo sapiens (Human).